Reading from the N-terminus, the 330-residue chain is Aspartate--ammonia ligase (330 aa).

The protein belongs to the class-II aminoacyl-tRNA synthetase family. AsnA subfamily.

The protein localises to the cytoplasm. It catalyses the reaction L-aspartate + NH4(+) + ATP = L-asparagine + AMP + diphosphate + H(+). The protein operates within amino-acid biosynthesis; L-asparagine biosynthesis; L-asparagine from L-aspartate (ammonia route): step 1/1. The polypeptide is Aspartate--ammonia ligase (Escherichia coli O8 (strain IAI1)).